Here is a 169-residue protein sequence, read N- to C-terminus: Cell division inhibitor SulA (169 aa).

The segment at 106 to 112 (ALRTGNY) is ftsZ binding. A lon protease binding region spans residues 162 to 169 (KIHSNLYH).

This sequence belongs to the SulA family. Interacts with FtsZ. Post-translationally, is rapidly cleaved and degraded by the Lon protease once DNA damage is repaired.

Component of the SOS system and an inhibitor of cell division. Accumulation of SulA causes rapid cessation of cell division and the appearance of long, non-septate filaments. In the presence of GTP, binds a polymerization-competent form of FtsZ in a 1:1 ratio, thus inhibiting FtsZ polymerization and therefore preventing it from participating in the assembly of the Z ring. This mechanism prevents the premature segregation of damaged DNA to daughter cells during cell division. This chain is Cell division inhibitor SulA, found in Shigella boydii serotype 18 (strain CDC 3083-94 / BS512).